Reading from the N-terminus, the 486-residue chain is Malonate-semialdehyde dehydrogenase 1 (486 aa).

NAD(+)-binding residues include phenylalanine 154, lysine 178, glutamate 181, arginine 182, and serine 231. The active-site Nucleophile is cysteine 286. Residue glutamate 386 coordinates NAD(+).

The protein belongs to the aldehyde dehydrogenase family. IolA subfamily. In terms of assembly, homotetramer.

It catalyses the reaction 3-oxopropanoate + NAD(+) + CoA + H2O = hydrogencarbonate + acetyl-CoA + NADH + H(+). It carries out the reaction 2-methyl-3-oxopropanoate + NAD(+) + CoA + H2O = propanoyl-CoA + hydrogencarbonate + NADH + H(+). It functions in the pathway polyol metabolism; myo-inositol degradation into acetyl-CoA; acetyl-CoA from myo-inositol: step 7/7. Catalyzes the oxidation of malonate semialdehyde (MSA) and methylmalonate semialdehyde (MMSA) into acetyl-CoA and propanoyl-CoA, respectively. Is involved in a myo-inositol catabolic pathway. Bicarbonate, and not CO2, is the end-product of the enzymatic reaction. The sequence is that of Malonate-semialdehyde dehydrogenase 1 from Oceanobacillus iheyensis (strain DSM 14371 / CIP 107618 / JCM 11309 / KCTC 3954 / HTE831).